A 194-amino-acid chain; its full sequence is Ribosomal RNA large subunit methyltransferase E (194 aa).

Residues Gly-48, Trp-50, Asp-66, Asn-82, and Asp-110 each contribute to the S-adenosyl-L-methionine site. The active-site Proton acceptor is the Lys-150.

Belongs to the class I-like SAM-binding methyltransferase superfamily. RNA methyltransferase RlmE family.

It localises to the cytoplasm. It catalyses the reaction uridine(2552) in 23S rRNA + S-adenosyl-L-methionine = 2'-O-methyluridine(2552) in 23S rRNA + S-adenosyl-L-homocysteine + H(+). Specifically methylates the uridine in position 2552 of 23S rRNA at the 2'-O position of the ribose in the fully assembled 50S ribosomal subunit. The protein is Ribosomal RNA large subunit methyltransferase E of Picrophilus torridus (strain ATCC 700027 / DSM 9790 / JCM 10055 / NBRC 100828 / KAW 2/3).